The primary structure comprises 273 residues: HLA class II histocompatibility antigen, DO beta chain (273 aa).

The N-terminal stretch at 1 to 26 (MGSGWVPWVVALLVNLTRLDSSMTQG) is a signal peptide. The segment at 27-120 (TDSPEDFVIQ…LGAPFTVGRK (94 aa)) is beta-1. The Extracellular segment spans residues 27–224 (TDSPEDFVIQ…RAQSEYSWRK (198 aa)). Cystine bridges form between Cys-41/Cys-105 and Cys-143/Cys-199. Asn-45 is a glycosylation site (N-linked (GlcNAc...) asparagine). Residues 121 to 214 (VQPEVTVYPE…SLLSPVSVEW (94 aa)) are beta-2. Positions 123 to 213 (PEVTVYPERT…SSLLSPVSVE (91 aa)) constitute an Ig-like C1-type domain. The connecting peptide stretch occupies residues 215 to 224 (RAQSEYSWRK). Residues 225–245 (MLSGIAAFLLGLIFLLVGIVI) traverse the membrane as a helical segment. The Cytoplasmic segment spans residues 246-273 (QLRAQKGYVRTQMSGNEVSRAVLLPQSC).

This sequence belongs to the MHC class II family. In terms of assembly, heterodimer of an alpha chain (DOA) and a beta chain (DOB). Forms a heterotetrameric complex with an HLA-DM molecule during intracellular transport in endosomal/lysosomal compartments in B-cells.

The protein resides in the endosome membrane. Its subcellular location is the lysosome membrane. Its function is as follows. Important modulator in the HLA class II restricted antigen presentation pathway by interaction with the HLA-DM molecule in B-cells. Modifies peptide exchange activity of HLA-DM. The protein is HLA class II histocompatibility antigen, DO beta chain (HLA-DOB) of Homo sapiens (Human).